The sequence spans 49 residues: U1-theraphotoxin-Lp1b (49 aa).

4 cysteine pairs are disulfide-bonded: Cys4/Cys17, Cys8/Cys41, Cys22/Cys24, and Cys35/Cys46.

As to expression, expressed by the venom gland.

The protein resides in the secreted. Functionally, toxin that causes irreversible contractile paralysis into adult Aedes aegypti resulting in 100% mortality after 24 hours. The protein is U1-theraphotoxin-Lp1b of Lasiodora parahybana (Brazilian salmon pink birdeater).